The chain runs to 273 residues: Protein ALUMINUM SENSITIVE 3 (273 aa).

7 helical membrane-spanning segments follow: residues 14 to 34 (WLIV…VVLL), 51 to 71 (IYSV…LQFI), 76 to 96 (NSGW…YTAG), 107 to 127 (YVAG…LVLL), 136 to 156 (YMIP…GVTM), 191 to 213 (ALVI…SLPG), and 228 to 248 (AIQL…VSSI).

This sequence belongs to the UPF0014 family. As to expression, expressed in roots, leaves, stems, and flowers.

Its subcellular location is the cell membrane. In terms of biological role, required for aluminum (Al) resistance/tolerance, probably by translocating Al from sensitive tissues such as growing roots to tissues less sensisitive to the toxic effects of Al. The polypeptide is Protein ALUMINUM SENSITIVE 3 (ALS3) (Arabidopsis thaliana (Mouse-ear cress)).